The sequence spans 497 residues: MKFSELGLSDSLLKAIKRSGYEEATPIQEQTIPMVLEGKDVIGQAQTGTGKTAAFGLPIIENVDTENPNIQAIIISPTRELAIQTQEELYRLGKDKHVRVQVVYGGADIRRQIKSLKQHPQILVGTPGRLRDHINRHTVKLDHIKTLVLDEADEMLNMGFLEDIESIIKETPDDRQTLLFSATMPPEIKRIGVQFMSDPETVRIKAKELTTDLVDQYYVRARDYEKFDIMTRLIDVQDPDLTIVFGRTKRRVDELSKGLIARGYNAAGIHGDLTQDKRSKIMWKFKNNELDILVATDVAARGLDISGVTHVYNYDIPSDPDSYVHRIGRTGRAGHHGVSLTFVTPNEMDYLHEIEKLTRVRMLPLKPPTAEEAFKGQVASAFNDIDELIAQDSTDRYEEAAEKLLETHNATDLVAALLNNMTKEAASEVPVKITPERPLPRRNKRNNRNGNRNNSHGGNHYRRKNFRRHQHGSHRNDNHGKSHSSRHSFNIRHRKEN.

The Q motif motif lies at 1–29 (MKFSELGLSDSLLKAIKRSGYEEATPIQE). One can recognise a Helicase ATP-binding domain in the interval 32–202 (IPMVLEGKDV…VQFMSDPETV (171 aa)). 45–52 (AQTGTGKT) is a binding site for ATP. The short motif at 150-153 (DEAD) is the DEAD box element. Positions 228–373 (DIMTRLIDVQ…PLKPPTAEEA (146 aa)) constitute a Helicase C-terminal domain. A disordered region spans residues 425 to 497 (AASEVPVKIT…SFNIRHRKEN (73 aa)). The segment covering 448-458 (RNGNRNNSHGG) has biased composition (low complexity). Basic residues-rich tracts occupy residues 459–473 (NHYR…QHGS) and 481–497 (KSHS…RKEN).

The protein belongs to the DEAD box helicase family. CshA subfamily. Oligomerizes, may be a member of the RNA degradosome.

The protein localises to the cytoplasm. It localises to the cell membrane. The enzyme catalyses ATP + H2O = ADP + phosphate + H(+). In terms of biological role, DEAD-box RNA helicase possibly involved in RNA degradation. Unwinds dsRNA in both 5'- and 3'-directions, has RNA-dependent ATPase activity. Over-expression leads to cell aggregation. The sequence is that of ATP-dependent RNA helicase CshA from Limosilactobacillus reuteri (Lactobacillus reuteri).